The sequence spans 240 residues: MVVSHLNRTVTSLNELFEHHAHFAGLSDISISEDIPVEGDISVPVGSQNADNDFSTLDEPVKDTILRDLRAVGQKFVHVMYPKKSSALLRDWDLWGPLLLCVTLALMLQGGSADSEEDGRPQFAEVFVIIWFGSVIITLNSKLLGGTISFFQSLCVLGYCILPLTVAMIVCRIVLLGGSGVVSFAVRLIVVTASFSWSTFASTAFLADSQPTNRKALVVYPVFLFYFVIGWMILTFSPSH.

The Cytoplasmic portion of the chain corresponds to 1-91; the sequence is MVVSHLNRTV…PKKSSALLRD (91 aa). A helical transmembrane segment spans residues 92–112; it reads WDLWGPLLLCVTLALMLQGGS. At 113 to 125 the chain is on the lumenal side; that stretch reads ADSEEDGRPQFAE. Residues 126–146 traverse the membrane as a helical segment; the sequence is VFVIIWFGSVIITLNSKLLGG. Topologically, residues 147–149 are cytoplasmic; that stretch reads TIS. Residues 150–170 traverse the membrane as a helical segment; it reads FFQSLCVLGYCILPLTVAMIV. Over 171-172 the chain is Lumenal; the sequence is CR. A helical transmembrane segment spans residues 173–193; it reads IVLLGGSGVVSFAVRLIVVTA. The Cytoplasmic portion of the chain corresponds to 194–215; it reads SFSWSTFASTAFLADSQPTNRK. A helical membrane pass occupies residues 216 to 236; the sequence is ALVVYPVFLFYFVIGWMILTF. Residues 237–240 lie on the Lumenal side of the membrane; sequence SPSH.

The protein belongs to the YIP1 family.

It localises to the golgi apparatus membrane. The chain is Protein YIPF6 (yipf6) from Danio rerio (Zebrafish).